A 485-amino-acid chain; its full sequence is Probable cobyric acid synthase (485 aa).

Residues 250–435 (EIEVAVIRLP…LHGLFDNRNI (186 aa)) enclose the GATase cobBQ-type domain. Residue Cys328 is the Nucleophile of the active site. His427 is a catalytic residue.

The protein belongs to the CobB/CobQ family. CobQ subfamily.

The protein operates within cofactor biosynthesis; adenosylcobalamin biosynthesis. In terms of biological role, catalyzes amidations at positions B, D, E, and G on adenosylcobyrinic A,C-diamide. NH(2) groups are provided by glutamine, and one molecule of ATP is hydrogenolyzed for each amidation. This is Probable cobyric acid synthase from Methanosarcina mazei (strain ATCC BAA-159 / DSM 3647 / Goe1 / Go1 / JCM 11833 / OCM 88) (Methanosarcina frisia).